A 732-amino-acid chain; its full sequence is Ferric aerobactin receptor (732 aa).

A signal peptide spans 1 to 25 (MMISKKYTLWALNPLLLTMMAPAVA). The short motif at 31–38 (ETFVVSAN) is the TonB box element. Residues 43 to 153 (TVAEMAQTTW…TGGLINIVTK (111 aa)) enclose the TBDR plug domain. The region spanning 158–732 (ETMMEFEAGT…TFGLNYSVLF (575 aa)) is the TBDR beta-barrel domain. Residues 715–732 (YDYKGRGRTFGLNYSVLF) carry the TonB C-terminal box motif.

It belongs to the TonB-dependent receptor family.

The protein localises to the cell outer membrane. Functionally, receptor for cloacin DF13/aerobactin. In Escherichia coli, this protein is Ferric aerobactin receptor (iutA).